We begin with the raw amino-acid sequence, 100 residues long: Apolipoprotein C-II (100 aa).

Positions 1-22 (MGSRFLLALFLVLLVLGYEVQG) are cleaved as a signal peptide. The lipid binding stretch occupies residues 66-74 (SVDEKLRDM). A lipoprotein lipase cofactor region spans residues 78-100 (SSAAVSTYAGIFTDQILTLLKGE).

It belongs to the apolipoprotein C2 family. Post-translationally, proapolipoprotein C-II is synthesized as a sialic acid containing glycoprotein which is subsequently desialylated prior to its proteolytic processing. Proapolipoprotein C-II, the major form found in plasma undergoes proteolytic cleavage of its N-terminal hexapeptide to generate the mature form apolipoprotein C-II, which occurs as the minor form in plasma.

It localises to the secreted. Its function is as follows. Component of chylomicrons, very low-density lipoproteins (VLDL), low-density lipoproteins (LDL), and high-density lipoproteins (HDL) in plasma. Plays an important role in lipoprotein metabolism as an activator of lipoprotein lipase. In Neotoma lepida (Desert woodrat), this protein is Apolipoprotein C-II (Apoc2).